The sequence spans 208 residues: V-type ATP synthase subunit E (208 aa).

Belongs to the V-ATPase E subunit family.

Functionally, produces ATP from ADP in the presence of a proton gradient across the membrane. This chain is V-type ATP synthase subunit E, found in Chlamydia trachomatis serovar A (strain ATCC VR-571B / DSM 19440 / HAR-13).